The following is a 149-amino-acid chain: Transcription antitermination protein NusB (149 aa).

This sequence belongs to the NusB family.

Involved in transcription antitermination. Required for transcription of ribosomal RNA (rRNA) genes. Binds specifically to the boxA antiterminator sequence of the ribosomal RNA (rrn) operons. This Acinetobacter baumannii (strain AB307-0294) protein is Transcription antitermination protein NusB.